The chain runs to 421 residues: Threonine--tRNA ligase editing subunit (421 aa).

Belongs to the class-II aminoacyl-tRNA synthetase family. Archaea-specific ThrRS editing domain subfamily. In terms of assembly, probably interacts with its catalytic subunit.

It localises to the cytoplasm. Functionally, freestanding tRNA editing subunit of threonine--tRNA ligase, the catalytic subunit is probably AC Q9YDW0. Deacylates (edits) mischarged L-seryl-tRNA(Thr) in trans; has no activity on correctly charged L-threonyl-tRNA(Thr). Probably does not aminoacylate tRNA(Thr). Deacylates correctly charged glycyl-tRNA(Gly), but not glycyl-tRNA(Gly)(2'-dA76) (the terminal 2'-OH of tRNA adenine 76 has been dehydroxylated) nor the 2'-fluoro tRNA derivative, strongly suggesting the editing function is catalyzed by the 2'-OH of A76 of tRNA(Thr). This is Threonine--tRNA ligase editing subunit (thrS2) from Aeropyrum pernix (strain ATCC 700893 / DSM 11879 / JCM 9820 / NBRC 100138 / K1).